The sequence spans 374 residues: Probable tRNA pseudouridine synthase D (374 aa).

Aspartate 81 acts as the Nucleophile in catalysis. In terms of domain architecture, TRUD spans valine 141 to leucine 340.

This sequence belongs to the pseudouridine synthase TruD family.

It carries out the reaction uridine(13) in tRNA = pseudouridine(13) in tRNA. Could be responsible for synthesis of pseudouridine from uracil-13 in transfer RNAs. The chain is Probable tRNA pseudouridine synthase D from Nanoarchaeum equitans (strain Kin4-M).